Here is a 449-residue protein sequence, read N- to C-terminus: Tubulin alpha-1C chain (449 aa).

The MREC motif motif lies at methionine 1 to cysteine 4. GTP is bound at residue glutamine 11. An N6-acetyllysine modification is found at lysine 40. Positions 71, 140, 144, 145, 179, 206, and 228 each coordinate GTP. Glutamate 71 provides a ligand contact to Mg(2+). Residue glutamate 254 is part of the active site. Position 282 is a 3'-nitrotyrosine (tyrosine 282). Positions glutamate 429–tyrosine 449 are disordered. The segment covering aspartate 431 to tyrosine 449 has biased composition (acidic residues). The residue at position 432 (tyrosine 432) is a Phosphotyrosine. Position 439 is a phosphoserine (serine 439). Tyrosine 449 carries the 3'-nitrotyrosine modification.

It belongs to the tubulin family. As to quaternary structure, dimer of alpha and beta chains. A typical microtubule is a hollow water-filled tube with an outer diameter of 25 nm and an inner diameter of 15 nM. Alpha-beta heterodimers associate head-to-tail to form protofilaments running lengthwise along the microtubule wall with the beta-tubulin subunit facing the microtubule plus end conferring a structural polarity. Microtubules usually have 13 protofilaments but different protofilament numbers can be found in some organisms and specialized cells. Mg(2+) is required as a cofactor. Some glutamate residues at the C-terminus are polyglutamylated, resulting in polyglutamate chains on the gamma-carboxyl group. Polyglutamylation plays a key role in microtubule severing by spastin (SPAST). SPAST preferentially recognizes and acts on microtubules decorated with short polyglutamate tails: severing activity by SPAST increases as the number of glutamates per tubulin rises from one to eight, but decreases beyond this glutamylation threshold. Glutamylation is also involved in cilia motility. Post-translationally, some glutamate residues at the C-terminus are monoglycylated but not polyglycylated due to the absence of functional TTLL10 in human. Monoglycylation is mainly limited to tubulin incorporated into cilia and flagella axonemes, which is required for their stability and maintenance. Flagella glycylation controls sperm motility. Both polyglutamylation and monoglycylation can coexist on the same protein on adjacent residues, and lowering glycylation levels increases polyglutamylation, and reciprocally. In terms of processing, acetylation of alpha chains at Lys-40 is located inside the microtubule lumen. This modification has been correlated with increased microtubule stability, intracellular transport and ciliary assembly. Methylation of alpha chains at Lys-40 is found in mitotic microtubules and is required for normal mitosis and cytokinesis contributing to genomic stability. Post-translationally, nitration of Tyr-449 is irreversible and interferes with normal dynein intracellular distribution. In terms of processing, undergoes a tyrosination/detyrosination cycle, the cyclic removal and re-addition of a C-terminal tyrosine residue by the enzymes tubulin tyrosine carboxypeptidase (MATCAP1/KIAA0895L, VASH1 or VASH2) and tubulin tyrosine ligase (TTL), respectively. Tyrosination promotes microtubule interaction with CAP-Gly domain-containing proteins such as CLIP1, CLIP2 and DCTN1. Tyrosination regulates the initiation of dynein-dynactin motility via interaction with DCTN1, which brings the dynein-dynactin complex into contact with microtubules. In neurons, tyrosinated tubulins mediate the initiation of retrograde vesicle transport. Post-translationally, detyrosination is involved in metaphase plate congression by guiding chromosomes during mitosis: detyrosination promotes interaction with CENPE, promoting pole-proximal transport of chromosomes toward the equator. Detyrosination increases microtubules-dependent mechanotransduction in dystrophic cardiac and skeletal muscle. In cardiomyocytes, detyrosinated microtubules are required to resist to contractile compression during contraction: detyrosination promotes association with desmin (DES) at force-generating sarcomeres, leading to buckled microtubules and mechanical resistance to contraction.

It localises to the cytoplasm. Its subcellular location is the cytoskeleton. It carries out the reaction GTP + H2O = GDP + phosphate + H(+). In terms of biological role, tubulin is the major constituent of microtubules, a cylinder consisting of laterally associated linear protofilaments composed of alpha- and beta-tubulin heterodimers. Microtubules grow by the addition of GTP-tubulin dimers to the microtubule end, where a stabilizing cap forms. Below the cap, tubulin dimers are in GDP-bound state, owing to GTPase activity of alpha-tubulin. The polypeptide is Tubulin alpha-1C chain (TUBA1C) (Homo sapiens (Human)).